We begin with the raw amino-acid sequence, 715 residues long: Methylmalonyl-CoA mutase large subunit (715 aa).

Residues Tyr70, Met73, Arg77, Thr80, Arg82, Tyr84, and Ser109 each contribute to the (R)-methylmalonyl-CoA site. Phe112 and Ala134 together coordinate cob(II)alamin. (R)-methylmalonyl-CoA is bound by residues Thr190 and Gln192. 2 residues coordinate cob(II)alamin: Val201 and Arg202. Positions 202, 239, 278, and 280 each coordinate (R)-methylmalonyl-CoA. Cob(II)alamin-binding residues include Gly328, Glu365, Ala368, Gly599, His600, Asp601, Arg602, Ser645, Leu647, Gly676, and Thr699. The region spanning 587–715 (QPRIMIAKMG…AKVLEILLEE (129 aa)) is the B12-binding domain.

The protein belongs to the methylmalonyl-CoA mutase family. Heterodimer of an alpha and a beta chain. Adenosylcob(III)alamin serves as cofactor.

The catalysed reaction is (R)-methylmalonyl-CoA = succinyl-CoA. Functionally, catalyzes the isomerization of succinyl-CoA to methylmalonyl-CoA during synthesis of propionate from tricarboxylic acid-cycle intermediates. This Porphyromonas gingivalis (strain ATCC BAA-308 / W83) protein is Methylmalonyl-CoA mutase large subunit (mutB).